Consider the following 242-residue polypeptide: tRNA pseudouridine synthase A (242 aa).

Asp-51 acts as the Nucleophile in catalysis. Tyr-107 lines the substrate pocket.

It belongs to the tRNA pseudouridine synthase TruA family. As to quaternary structure, homodimer.

The catalysed reaction is uridine(38/39/40) in tRNA = pseudouridine(38/39/40) in tRNA. Functionally, formation of pseudouridine at positions 38, 39 and 40 in the anticodon stem and loop of transfer RNAs. This Helicobacter acinonychis (strain Sheeba) protein is tRNA pseudouridine synthase A.